Here is a 317-residue protein sequence, read N- to C-terminus: DNA-directed RNA polymerase subunit alpha 2 (317 aa).

The interval 1–227 (MALENLLHPT…NQLRNIVDIE (227 aa)) is alpha N-terminal domain (alpha-NTD). The tract at residues 241-317 (INPILLKHVE…TLIENWPQDL (77 aa)) is alpha C-terminal domain (alpha-CTD).

This sequence belongs to the RNA polymerase alpha chain family. As to quaternary structure, homodimer. The RNAP catalytic core consists of 2 alpha, 1 beta, 1 beta' and 1 omega subunit. When a sigma factor is associated with the core the holoenzyme is formed, which can initiate transcription.

The enzyme catalyses RNA(n) + a ribonucleoside 5'-triphosphate = RNA(n+1) + diphosphate. Its function is as follows. DNA-dependent RNA polymerase catalyzes the transcription of DNA into RNA using the four ribonucleoside triphosphates as substrates. The polypeptide is DNA-directed RNA polymerase subunit alpha 2 (Francisella tularensis subsp. holarctica (strain LVS)).